The primary structure comprises 135 residues: Cilia- and flagella-associated protein 144 (135 aa).

Positions 76–100 (QGPKKKYSETQTEAQEIGWDPNPLI) are disordered.

It belongs to the CFAP144 family. As to quaternary structure, microtubule inner protein component of sperm flagellar doublet microtubules. In terms of tissue distribution, predominantly expressed in tissues containing motile cilia.

The protein resides in the cytoplasm. It localises to the cytoskeleton. The protein localises to the cilium axoneme. Its subcellular location is the flagellum axoneme. This chain is Cilia- and flagella-associated protein 144, found in Mus musculus (Mouse).